A 558-amino-acid polypeptide reads, in one-letter code: Alkaline/neutral invertase CINV2 (558 aa).

Phosphoserine occurs at positions 16, 19, and 50. Thr-79 is modified (phosphothreonine). Ser-555 bears the Phosphoserine mark.

Belongs to the glycosyl hydrolase 100 family.

The protein localises to the cytoplasm. It localises to the cytosol. It carries out the reaction Hydrolysis of terminal non-reducing beta-D-fructofuranoside residues in beta-D-fructofuranosides.. Cytosolic invertase that may cleave sucrose into glucose and fructose, and that is involved in the regulation of root growth. May regulate sugar-mediated root development by controlling sucrose catabolism in root cells. The polypeptide is Alkaline/neutral invertase CINV2 (Arabidopsis thaliana (Mouse-ear cress)).